The chain runs to 549 residues: Chaperonin GroEL 2 (549 aa).

ATP is bound by residues 29 to 32 (TLGP), Lys-50, 86 to 90 (DGTTT), Gly-414, 477 to 479 (NAA), and Asp-493.

It belongs to the chaperonin (HSP60) family. In terms of assembly, forms a cylinder of 14 subunits composed of two heptameric rings stacked back-to-back. Interacts with the co-chaperonin GroES.

It localises to the cytoplasm. The catalysed reaction is ATP + H2O + a folded polypeptide = ADP + phosphate + an unfolded polypeptide.. In terms of biological role, together with its co-chaperonin GroES, plays an essential role in assisting protein folding. The GroEL-GroES system forms a nano-cage that allows encapsulation of the non-native substrate proteins and provides a physical environment optimized to promote and accelerate protein folding. This chain is Chaperonin GroEL 2, found in Myxococcus xanthus (strain DK1622).